Here is a 581-residue protein sequence, read N- to C-terminus: A-type ATP synthase subunit A (581 aa).

234–241 is an ATP binding site; it reads GPFGSGKT.

It belongs to the ATPase alpha/beta chains family. Has multiple subunits with at least A(3), B(3), C, D, E, F, H, I and proteolipid K(x).

The protein localises to the cell membrane. It carries out the reaction ATP + H2O + 4 H(+)(in) = ADP + phosphate + 5 H(+)(out). Its function is as follows. Component of the A-type ATP synthase that produces ATP from ADP in the presence of a proton gradient across the membrane. The A chain is the catalytic subunit. This chain is A-type ATP synthase subunit A, found in Archaeoglobus fulgidus (strain ATCC 49558 / DSM 4304 / JCM 9628 / NBRC 100126 / VC-16).